The primary structure comprises 544 residues: Chaperonin GroEL 2 (544 aa).

Residues 29-32 (TLGP), 86-90 (DGTTT), Gly413, 479-481 (NAA), and Asp495 contribute to the ATP site.

This sequence belongs to the chaperonin (HSP60) family. As to quaternary structure, forms a cylinder of 14 subunits composed of two heptameric rings stacked back-to-back. Interacts with the co-chaperonin GroES.

The protein localises to the cytoplasm. The catalysed reaction is ATP + H2O + a folded polypeptide = ADP + phosphate + an unfolded polypeptide.. In terms of biological role, together with its co-chaperonin GroES, plays an essential role in assisting protein folding. The GroEL-GroES system forms a nano-cage that allows encapsulation of the non-native substrate proteins and provides a physical environment optimized to promote and accelerate protein folding. The protein is Chaperonin GroEL 2 of Prochlorococcus marinus (strain MIT 9515).